Reading from the N-terminus, the 565-residue chain is Urocanate hydratase (565 aa).

NAD(+) is bound by residues 61–62 (GG), Gln-139, 185–187 (GMG), Glu-205, Arg-210, 251–252 (NA), 272–276 (QTSAH), 282–283 (YL), and Tyr-331. Residue Cys-419 is part of the active site. Positions 453–472 (LDSGSVASPNRETESMRDGS) are disordered. The span at 463–472 (RETESMRDGS) shows a compositional bias: basic and acidic residues. Gly-501 lines the NAD(+) pocket.

The protein belongs to the urocanase family. NAD(+) serves as cofactor.

It localises to the cytoplasm. The catalysed reaction is 4-imidazolone-5-propanoate = trans-urocanate + H2O. It functions in the pathway amino-acid degradation; L-histidine degradation into L-glutamate; N-formimidoyl-L-glutamate from L-histidine: step 2/3. In terms of biological role, catalyzes the conversion of urocanate to 4-imidazolone-5-propionate. The protein is Urocanate hydratase of Pseudomonas syringae pv. syringae (strain B728a).